We begin with the raw amino-acid sequence, 88 residues long: MGKGTPSFGKRHNKSHTLCNRCGRRSFHVQKKTCSSCGYPAAKTRSYNWGAKAKRRHTTGTGRMRYLKHVSRRFKNGFQTGSASKASA.

Cys19, Cys22, Cys34, and Cys37 together coordinate Zn(2+). The C4-type zinc-finger motif lies at 19-37 (CNRCGRRSFHVQKKTCSSC).

This sequence belongs to the eukaryotic ribosomal protein eL37 family. In terms of assembly, component of the large ribosomal subunit (LSU). Mature yeast ribosomes consist of a small (40S) and a large (60S) subunit. The 40S small subunit contains 1 molecule of ribosomal RNA (18S rRNA) and 33 different proteins (encoded by 57 genes). The large 60S subunit contains 3 rRNA molecules (25S, 5.8S and 5S rRNA) and 46 different proteins (encoded by 81 genes). Zn(2+) is required as a cofactor.

It is found in the cytoplasm. In terms of biological role, component of the ribosome, a large ribonucleoprotein complex responsible for the synthesis of proteins in the cell. The small ribosomal subunit (SSU) binds messenger RNAs (mRNAs) and translates the encoded message by selecting cognate aminoacyl-transfer RNA (tRNA) molecules. The large subunit (LSU) contains the ribosomal catalytic site termed the peptidyl transferase center (PTC), which catalyzes the formation of peptide bonds, thereby polymerizing the amino acids delivered by tRNAs into a polypeptide chain. The nascent polypeptides leave the ribosome through a tunnel in the LSU and interact with protein factors that function in enzymatic processing, targeting, and the membrane insertion of nascent chains at the exit of the ribosomal tunnel. The polypeptide is Large ribosomal subunit protein eL37A (Saccharomyces cerevisiae (strain ATCC 204508 / S288c) (Baker's yeast)).